Reading from the N-terminus, the 166-residue chain is UPF0134 protein MPN_138 (166 aa).

It belongs to the UPF0134 family.

This chain is UPF0134 protein MPN_138, found in Mycoplasma pneumoniae (strain ATCC 29342 / M129 / Subtype 1) (Mycoplasmoides pneumoniae).